The chain runs to 430 residues: Adenylosuccinate synthetase (430 aa).

GTP is bound by residues 12-18 and 40-42; these read GDEGKGK and GHT. The active-site Proton acceptor is Asp-13. Residues Asp-13 and Gly-40 each coordinate Mg(2+). IMP is bound by residues 13 to 16, 38 to 41, Thr-130, Arg-144, Gln-224, Thr-239, and Arg-303; these read DEGK and NAGH. Residue His-41 is the Proton donor of the active site. 299–305 is a binding site for substrate; the sequence is VNTGRKR. GTP contacts are provided by residues Arg-305, 331-333, and 413-415; these read KLD and STS.

The protein belongs to the adenylosuccinate synthetase family. Homodimer. Mg(2+) is required as a cofactor.

The protein localises to the cytoplasm. It catalyses the reaction IMP + L-aspartate + GTP = N(6)-(1,2-dicarboxyethyl)-AMP + GDP + phosphate + 2 H(+). It functions in the pathway purine metabolism; AMP biosynthesis via de novo pathway; AMP from IMP: step 1/2. Functionally, plays an important role in the de novo pathway of purine nucleotide biosynthesis. Catalyzes the first committed step in the biosynthesis of AMP from IMP. The polypeptide is Adenylosuccinate synthetase (Rhodopseudomonas palustris (strain TIE-1)).